The chain runs to 476 residues: MKVSLPAFEKAKVLVVGDVMLDRYWTGPTGRISPEAPVPVVKISQIEDRPGGAANVALNVATLGGQVSLAGIVGKDEAADALTTGIQALGVEPKWHCVEGKPTITKLRVMSRNQQLIRLDFEEAYPEDESKALLTLSESALDNVAVVVLSDYAKGAITQPQEFIQKAIAKGVKVLVDPKGSDFSRYRGASLITPNMGEFEEVVGSVSSEAELVEKAQALLSEFDIEAILVTRSEKGMTLITADAPELHIPTVAREVYDVTGAGDTVISALATSLAAGSDLPQACAIANTAAGIVVAKLGTSTVSRIELIRALSVNHGESGFGAVSEDQLAYALEQARLRGERVVMTNGCFDILHAGHVSYLKQARELGDRLIVAVNDDDSVKRLKGEGRPVNQSDRRMAVLAGLASVDWVVPFTEDTPQRIISRLLPDLLVKGGDYKIEDIAGGKEVIAAGGSVKVLGFEDGVSTTSIIENIMANQ.

The segment at 1–319 (MKVSLPAFEK…RALSVNHGES (319 aa)) is ribokinase. 195–198 (NMGE) provides a ligand contact to ATP. Residue aspartate 264 is part of the active site. Residues 345–476 (MTNGCFDILH…SIIENIMANQ (132 aa)) are cytidylyltransferase.

It in the N-terminal section; belongs to the carbohydrate kinase PfkB family. In the C-terminal section; belongs to the cytidylyltransferase family. In terms of assembly, homodimer.

It carries out the reaction D-glycero-beta-D-manno-heptose 7-phosphate + ATP = D-glycero-beta-D-manno-heptose 1,7-bisphosphate + ADP + H(+). It catalyses the reaction D-glycero-beta-D-manno-heptose 1-phosphate + ATP + H(+) = ADP-D-glycero-beta-D-manno-heptose + diphosphate. It participates in nucleotide-sugar biosynthesis; ADP-L-glycero-beta-D-manno-heptose biosynthesis; ADP-L-glycero-beta-D-manno-heptose from D-glycero-beta-D-manno-heptose 7-phosphate: step 1/4. It functions in the pathway nucleotide-sugar biosynthesis; ADP-L-glycero-beta-D-manno-heptose biosynthesis; ADP-L-glycero-beta-D-manno-heptose from D-glycero-beta-D-manno-heptose 7-phosphate: step 3/4. Catalyzes the phosphorylation of D-glycero-D-manno-heptose 7-phosphate at the C-1 position to selectively form D-glycero-beta-D-manno-heptose-1,7-bisphosphate. Functionally, catalyzes the ADP transfer from ATP to D-glycero-beta-D-manno-heptose 1-phosphate, yielding ADP-D-glycero-beta-D-manno-heptose. The sequence is that of Bifunctional protein HldE from Shewanella sediminis (strain HAW-EB3).